Consider the following 1024-residue polypeptide: MSNAKERKHAKKMRNQPTNVTLSSGFVADRGVKHHSGGEKPFQAQKQEPHPGTSRQRQTRVNPHSLPDPEVNEQSSSKGMFRKKGGWKAGPEGTSQEIPKYITASTFAQARAAEISAMLKAVTQKSSNSLVFQTLPRHMRRRAMSHNVKRLPRRLQEIAQKEAEKAVHQKKEHSKNKCHKARRCHMNRTLEFNRRQKKNIWLETHIWHAKRFHMVKKWGYCLGERPTVKSHRACYRAMTNRCLLQDLSYYCCLELKGKEEEILKALSGMCNIDTGLTFAAVHCLSGKRQGSLVLYRVNKYPREMLGPVTFIWKSQRTPGDPSESRQLWIWLHPTLKQDILEEIKAACQCVEPIKSAVCIADPLPTPSQEKSQTELPDEKIGKKRKRKDDGENAKPIKKIIGDGTRDPCLPYSWISPTTGIIISDLTMEMNRFRLIGPLSHSILTEAIKAASVHTVGEDTEETPHRWWIETCKKPDSVSLHCRQEAIFELLGGITSPAEIPAGTILGLTVGDPRINLPQKKSKALPNPEKCQDNEKVRQLLLEGVPVECTHSFIWNQDICKSVTENKISDQDLNRMRSELLVPGSQLILGPHESKIPILLIQQPGKVTGEDRLGWGSGWDVLLPKGWGMAFWIPFIYRGVRVGGLKESAVHSQYKRSPNVPGDFPDCPAGMLFAEEQAKNLLEKYKRRPPAKRPNYVKLGTLAPFCCPWEQLTQDWESRVQAYEEPSVASSPNGKESDLRRSEVPCAPMPKKTHQPSDEVGTSIEHPREAEEVMDAGCQESAGPERITDQEASENHVAATGSHLCVLRSRKLLKQLSAWCGPSSEDSRGGRRAPGRGQQGLTREACLSILGHFPRALVWVSLSLLSKGSPEPHTMICVPAKEDFLQLHEDWHYCGPQESKHSDPFRSKILKQKEKKKREKRQKPGRASSDGPAGEEPVAGQEALTLGLWSGPLPRVTLHCSRTLLGFVTQGDFSMAVGCGEALGFVSLTGLLDMLSSQPAAQRGLVLLRPPASLQYRFARIAIEV.

Over residues 1–14 (MSNAKERKHAKKMR) the composition is skewed to basic residues. Disordered stretches follow at residues 1 to 95 (MSNA…EGTS) and 365 to 399 (TPSQEKSQTELPDEKIGKKRKRKDDGENAKPIKKI). 2 stretches are compositionally biased toward polar residues: residues 15-24 (NQPTNVTLSS) and 53-62 (TSRQRQTRVN). A Phosphoserine modification is found at serine 367. Basic and acidic residues predominate over residues 387 to 399 (KDDGENAKPIKKI). Serine 584, serine 729, and serine 730 each carry phosphoserine. Disordered stretches follow at residues 722–762 (YEEP…VGTS), 773–792 (MDAGCQESAGPERITDQEAS), 819–838 (CGPSSEDSRGGRRAPGRGQQ), and 911–936 (QKEKKKREKRQKPGRASSDGPAGEEP). A compositionally biased stretch (basic residues) spans 911-923 (QKEKKKREKRQKP).

In terms of assembly, component of nuclear RNase P and RNase MRP ribonucleoproteins. RNase P consists of a catalytic RNA moiety and 10 different protein chains; POP1, POP4, POP5, POP7, RPP14, RPP21, RPP25, RPP30, RPP38 and RPP40. Within the RNase P complex, POP1, POP7 and RPP25 form the 'finger' subcomplex, POP5, RPP14, RPP40 and homodimeric RPP30 form the 'palm' subcomplex, and RPP21, POP4 and RPP38 form the 'wrist' subcomplex. All subunits of the RNase P complex interact with the catalytic RNA. Several subunits of RNase P are also part of the RNase MRP complex. RNase MRP consists of a catalytic RNA moiety and about 8 protein subunits; POP1, POP7, RPP25, RPP30, RPP38, RPP40 and possibly also POP4 and POP5.

The protein localises to the nucleus. Its subcellular location is the nucleolus. In terms of biological role, component of ribonuclease P, a ribonucleoprotein complex that generates mature tRNA molecules by cleaving their 5'-ends. Also a component of the MRP ribonuclease complex, which cleaves pre-rRNA sequences. The sequence is that of Ribonucleases P/MRP protein subunit POP1 (POP1) from Homo sapiens (Human).